The primary structure comprises 110 residues: UPF0339 protein PA0329 (110 aa).

2 consecutive repeat copies span residues 10–58 and 61–109. The interval 91 to 110 is disordered; it reads EAGVQSVKRATPEAGLSDES.

Belongs to the UPF0339 family. Duplicated subfamily.

In Pseudomonas aeruginosa (strain ATCC 15692 / DSM 22644 / CIP 104116 / JCM 14847 / LMG 12228 / 1C / PRS 101 / PAO1), this protein is UPF0339 protein PA0329.